A 157-amino-acid chain; its full sequence is Small ribosomal subunit protein uS7 (157 aa).

Belongs to the universal ribosomal protein uS7 family. In terms of assembly, part of the 30S ribosomal subunit. Contacts proteins S9 and S11.

One of the primary rRNA binding proteins, it binds directly to 16S rRNA where it nucleates assembly of the head domain of the 30S subunit. Is located at the subunit interface close to the decoding center, probably blocks exit of the E-site tRNA. This chain is Small ribosomal subunit protein uS7, found in Chlamydia muridarum (strain MoPn / Nigg).